The primary structure comprises 305 residues: Protein EXORDIUM-like 2 (305 aa).

A signal peptide spans 1–23 (MASNYRFAIFLTLFFATAGFSAA). N44 carries an N-linked (GlcNAc...) asparagine glycan.

Belongs to the EXORDIUM family.

It is found in the secreted. The protein resides in the extracellular space. Its subcellular location is the apoplast. May play a role in a brassinosteroid-dependent regulation of growth and development. This Arabidopsis thaliana (Mouse-ear cress) protein is Protein EXORDIUM-like 2 (EXL2).